Consider the following 237-residue polypeptide: 7-cyano-7-deazaguanine synthase (237 aa).

15–25 (LSGGMDSTVCA) is an ATP binding site. Zn(2+) is bound by residues cysteine 197, cysteine 205, cysteine 208, and cysteine 211.

Belongs to the QueC family. It depends on Zn(2+) as a cofactor.

It catalyses the reaction 7-carboxy-7-deazaguanine + NH4(+) + ATP = 7-cyano-7-deazaguanine + ADP + phosphate + H2O + H(+). The protein operates within purine metabolism; 7-cyano-7-deazaguanine biosynthesis. Its function is as follows. Catalyzes the ATP-dependent conversion of 7-carboxy-7-deazaguanine (CDG) to 7-cyano-7-deazaguanine (preQ(0)). This chain is 7-cyano-7-deazaguanine synthase, found in Koribacter versatilis (strain Ellin345).